The sequence spans 190 residues: Peptidyl-tRNA hydrolase (190 aa).

Y14 is a binding site for tRNA. The Proton acceptor role is filled by H19. TRNA is bound by residues Y64, N66, and N112.

Belongs to the PTH family. In terms of assembly, monomer.

The protein resides in the cytoplasm. It carries out the reaction an N-acyl-L-alpha-aminoacyl-tRNA + H2O = an N-acyl-L-amino acid + a tRNA + H(+). Its function is as follows. Hydrolyzes ribosome-free peptidyl-tRNAs (with 1 or more amino acids incorporated), which drop off the ribosome during protein synthesis, or as a result of ribosome stalling. In terms of biological role, catalyzes the release of premature peptidyl moieties from peptidyl-tRNA molecules trapped in stalled 50S ribosomal subunits, and thus maintains levels of free tRNAs and 50S ribosomes. The protein is Peptidyl-tRNA hydrolase of Pelodictyon phaeoclathratiforme (strain DSM 5477 / BU-1).